A 449-amino-acid polypeptide reads, in one-letter code: Ribulose bisphosphate carboxylase large chain (449 aa).

The residue at position 5 (lysine 5) is an N6,N6,N6-trimethyllysine. Asparagine 114 and threonine 164 together coordinate substrate. Lysine 166 (proton acceptor) is an active-site residue. Lysine 168 serves as a coordination point for substrate. The Mg(2+) site is built by lysine 192, aspartate 194, and glutamate 195. Lysine 192 carries the N6-carboxylysine modification. Histidine 285 (proton acceptor) is an active-site residue. Arginine 286, histidine 318, and serine 370 together coordinate substrate.

This sequence belongs to the RuBisCO large chain family. Type I subfamily. As to quaternary structure, heterohexadecamer of 8 large chains and 8 small chains; disulfide-linked. The disulfide link is formed within the large subunit homodimers. It depends on Mg(2+) as a cofactor. In terms of processing, the disulfide bond which can form in the large chain dimeric partners within the hexadecamer appears to be associated with oxidative stress and protein turnover.

The protein localises to the plastid. It localises to the chloroplast. The catalysed reaction is 2 (2R)-3-phosphoglycerate + 2 H(+) = D-ribulose 1,5-bisphosphate + CO2 + H2O. The enzyme catalyses D-ribulose 1,5-bisphosphate + O2 = 2-phosphoglycolate + (2R)-3-phosphoglycerate + 2 H(+). RuBisCO catalyzes two reactions: the carboxylation of D-ribulose 1,5-bisphosphate, the primary event in carbon dioxide fixation, as well as the oxidative fragmentation of the pentose substrate in the photorespiration process. Both reactions occur simultaneously and in competition at the same active site. The polypeptide is Ribulose bisphosphate carboxylase large chain (Zamioculcas zamiifolia (Aroid palm)).